Consider the following 332-residue polypeptide: Phosphate acyltransferase (332 aa).

Belongs to the PlsX family. As to quaternary structure, homodimer. Probably interacts with PlsY.

Its subcellular location is the cytoplasm. The catalysed reaction is a fatty acyl-[ACP] + phosphate = an acyl phosphate + holo-[ACP]. It participates in lipid metabolism; phospholipid metabolism. In terms of biological role, catalyzes the reversible formation of acyl-phosphate (acyl-PO(4)) from acyl-[acyl-carrier-protein] (acyl-ACP). This enzyme utilizes acyl-ACP as fatty acyl donor, but not acyl-CoA. In Fusobacterium nucleatum subsp. nucleatum (strain ATCC 25586 / DSM 15643 / BCRC 10681 / CIP 101130 / JCM 8532 / KCTC 2640 / LMG 13131 / VPI 4355), this protein is Phosphate acyltransferase.